We begin with the raw amino-acid sequence, 398 residues long: Succinyl-diaminopimelate desuccinylase (398 aa).

Residue H68 coordinates Zn(2+). Residue D70 is part of the active site. D101 serves as a coordination point for Zn(2+). E135 functions as the Proton acceptor in the catalytic mechanism. Residues E136, E164, and H349 each coordinate Zn(2+).

This sequence belongs to the peptidase M20A family. DapE subfamily. In terms of assembly, homodimer. Zn(2+) serves as cofactor. The cofactor is Co(2+).

The catalysed reaction is N-succinyl-(2S,6S)-2,6-diaminopimelate + H2O = (2S,6S)-2,6-diaminopimelate + succinate. The protein operates within amino-acid biosynthesis; L-lysine biosynthesis via DAP pathway; LL-2,6-diaminopimelate from (S)-tetrahydrodipicolinate (succinylase route): step 3/3. Catalyzes the hydrolysis of N-succinyl-L,L-diaminopimelic acid (SDAP), forming succinate and LL-2,6-diaminopimelate (DAP), an intermediate involved in the bacterial biosynthesis of lysine and meso-diaminopimelic acid, an essential component of bacterial cell walls. This Wolbachia pipientis wMel protein is Succinyl-diaminopimelate desuccinylase.